The following is a 126-amino-acid chain: Large ribosomal subunit protein bL12 (126 aa).

The protein belongs to the bacterial ribosomal protein bL12 family. Homodimer. Part of the ribosomal stalk of the 50S ribosomal subunit. Forms a multimeric L10(L12)X complex, where L10 forms an elongated spine to which 2 to 4 L12 dimers bind in a sequential fashion. Binds GTP-bound translation factors.

Its function is as follows. Forms part of the ribosomal stalk which helps the ribosome interact with GTP-bound translation factors. Is thus essential for accurate translation. The sequence is that of Large ribosomal subunit protein bL12 from Geotalea daltonii (strain DSM 22248 / JCM 15807 / FRC-32) (Geobacter daltonii).